The following is a 456-amino-acid chain: MKLMRKNETREFLIEDIEFPAVGVAFYNDKKVYIKGAVPGQKVLARVSKVRREKIEAKLKEIVTNIPGAAQPKCPDFGVCGGCVHQFLPYEKQLEFKEREVLKLFKDAKIEGFEYLGILGSPEKEEYRNKMEYTFGDFVKGGELTLGMHAKNSGFSIVNTDKCNIVDEDFRIILKTVVEYFRKKDLPIYKVMQHVGYLRNLVVRKAKNTGEILIALVTTSQVDFDLTELTEILKSINYLGELKGILHVINDGLADMVRGDKIVTLFGQDYITERILDLKFKISLFSFFQTNSKGAEKLYSEVLEFLGDVSNKTVFDLYCGTGTIGQLASKKAEKVIGIELIEEAVEAAKENTKLNNISNCSFIAGDVAKVITEIKEKPDTIILDPPRPGVSPNAMKYVIKFNAPEIVYVSCNPKTLVNDLGVLRAYGYEVEKVKIVDMFPGTGHVETVVLLQRKII.

The TRAM domain maps to 3-61; it reads LMRKNETREFLIEDIEFPAVGVAFYNDKKVYIKGAVPGQKVLARVSKVRREKIEAKLKE. [4Fe-4S] cluster is bound by residues C74, C80, C83, and C163. Residues Q289, Y318, E339, and D384 each coordinate S-adenosyl-L-methionine. C411 serves as the catalytic Nucleophile.

This sequence belongs to the class I-like SAM-binding methyltransferase superfamily. RNA M5U methyltransferase family.

This is an uncharacterized protein from Clostridium acetobutylicum (strain ATCC 824 / DSM 792 / JCM 1419 / IAM 19013 / LMG 5710 / NBRC 13948 / NRRL B-527 / VKM B-1787 / 2291 / W).